A 304-amino-acid chain; its full sequence is Non-specific ribonucleoside hydrolase RihC (304 aa).

Histidine 233 is an active-site residue.

It belongs to the IUNH family. RihC subfamily.

Its function is as follows. Hydrolyzes both purine and pyrimidine ribonucleosides with a broad-substrate specificity. The chain is Non-specific ribonucleoside hydrolase RihC from Shigella dysenteriae serotype 1 (strain Sd197).